A 537-amino-acid chain; its full sequence is MDCKVVSLNEKDQFIPKIKSSDPVITGLFQYDAAQQTSFEKRMSKENNGREAALANVIREYMSDLKLSSEQELNIQHLANGSKVVIGGQQAGLFGGPLYIFHKIFSIITLSKELTDTHKQQVVPVFWIAGEDHDFDEVNHTFVYNENHGSLHKVKYHTMEMPETTISRYYPDKAELKQTLKTMFIHMKETVHTQGLLEICDRIIDQYDSWTDMFKALLHETFKAYGVLFIDAQFEPLRKMEAPMFKKILKKHQLLDDAFRATQQRTQNQGLKAMIQTDTNVHLFLHDENMRQLVSYDGKHFKLNKTDKTYVKEEIINIAENQPELFSNNVVTRPLMEEWLFNTVAFIGGPSEIKYWAELKDVFELFDVEMPIVMPRLRITYLNDRIEKILSKYNIPLEKVLVDGVEGERSKFIRELASHQFIEKVEGMIEQQRRLNQDLLDEVAGNQNNINLVNKNNEIHIQQYDYLLKRYLLNIERENDISMKQFREIQETLHPMGGLQERIWNPLQILNDFGTDVFKPSTYPPLSYTFDHIIIKP.

Residues 422–450 (IEKVEGMIEQQRRLNQDLLDEVAGNQNNI) are a coiled coil.

This sequence belongs to the BshC family.

Its function is as follows. Involved in bacillithiol (BSH) biosynthesis. May catalyze the last step of the pathway, the addition of cysteine to glucosamine malate (GlcN-Mal) to generate BSH. The polypeptide is Putative cysteine ligase BshC (Staphylococcus aureus (strain bovine RF122 / ET3-1)).